The primary structure comprises 34 residues: Calcitonin-like peptide 2 (34 aa).

A disulfide bridge connects residues cysteine 2 and cysteine 7. Phenylalanine 34 bears the Phenylalanine amide mark.

This is Calcitonin-like peptide 2 from Odorrana schmackeri (Schmacker's frog).